The primary structure comprises 355 residues: F-box only protein 32 (355 aa).

A Nuclear localization signal motif is present at residues 62–67 (KKRKKD). Positions 169-173 (LLQTL) match the Nuclear export signal motif. In terms of domain architecture, F-box spans 223-271 (LTFTDLPLCLQLNIMQRLSDGRDLVSLGQAAPDLHVLSEDRLLWKKLCQ). The Bipartite nuclear localization signal signature appears at 280-295 (RKRLILSDKGQLDWKK).

Part of the SCF (SKP1-CUL1-F-box) E3 ubiquitin-protein ligase complex SCF(FBXO32) formed of CUL1, SKP1, RBX1 and FBXO32. As to expression, specifically expressed in cardiac and skeletal muscle.

The protein resides in the cytoplasm. Its subcellular location is the nucleus. Its pathway is protein modification; protein ubiquitination. In terms of biological role, substrate recognition component of a SCF (SKP1-CUL1-F-box protein) E3 ubiquitin-protein ligase complex which mediates the ubiquitination and subsequent proteasomal degradation of target proteins. Probably recognizes and binds to phosphorylated target proteins during skeletal muscle atrophy. Recognizes TERF1. The polypeptide is F-box only protein 32 (FBXO32) (Homo sapiens (Human)).